A 284-amino-acid chain; its full sequence is N-acylphosphatidylethanolamine synthase (284 aa).

The helical transmembrane segment at 21-37 (TVIMAVSAFAKAVANLC) threads the bilayer. The HXXXXD motif motif lies at 67–72 (HMSTLD). The segment at 122-163 (GGGIYQENMNEALQRLKDGSWLHTFPEGKVFQDDVPIRRLKW) is hydrophilic.

It belongs to the taffazin family. Essentially present in young tissues. Expressed in roots, cotyledons, leaves, and shoot and root apical meristems.

It is found in the cell membrane. Functionally, acyltransferase that catalyzes the N-acylation of phosphatidylethanolamine to form N-acylphosphatidylethanolamine (N-acyl-PE) (e.g. NAPEs containing C16:0, C16:1, C18:0, and C18:1). Also mediates the formation of acylphosphatidylglycerol (acyl-PG) from lysoglycerophospholipid by O-acylation. Uses acyl-CoA as acyl donors. Acylates 1-acyllysophosphatidylethanolamine (1-acyllyso-PE) and 1-acyllysophosphatidylglycerol (1-acyllyso-PG) at the sn-2-position. This Arabidopsis thaliana (Mouse-ear cress) protein is N-acylphosphatidylethanolamine synthase.